A 619-amino-acid chain; its full sequence is CLPTM1-like membrane protein cnrB (619 aa).

Residues Met-1–Gln-21 form a disordered region. A compositionally biased stretch (low complexity) spans Ala-9 to Gln-21. A run of 6 helical transmembrane segments spans residues Ile-26 to Ala-46, Trp-324 to Phe-344, Leu-360 to Leu-380, Thr-384 to Gly-404, Tyr-445 to His-465, and Val-474 to Ile-496. The segment at Ser-566–Val-619 is disordered. Over residues Gln-574–Glu-590 the composition is skewed to basic and acidic residues. Positions Lys-591–Ser-605 are enriched in acidic residues.

It belongs to the CLPTM1 family.

It localises to the membrane. In Dictyostelium discoideum (Social amoeba), this protein is CLPTM1-like membrane protein cnrB (cnrB).